Reading from the N-terminus, the 318-residue chain is NADH-ubiquinone oxidoreductase chain 1 (318 aa).

The next 8 helical transmembrane spans lie at 1–21 (MLPI…VAFL), 71–91 (LLIL…TPIP), 101–121 (LGLL…LWAG), 145–165 (VTLG…TMQL), 172–192 (HIWL…STLA), 224–244 (FFLA…IMFI), 253–273 (ELFL…FLWI), and 294–314 (LPLT…ISGI).

Belongs to the complex I subunit 1 family.

The protein resides in the mitochondrion inner membrane. It catalyses the reaction a ubiquinone + NADH + 5 H(+)(in) = a ubiquinol + NAD(+) + 4 H(+)(out). Core subunit of the mitochondrial membrane respiratory chain NADH dehydrogenase (Complex I) that is believed to belong to the minimal assembly required for catalysis. Complex I functions in the transfer of electrons from NADH to the respiratory chain. The immediate electron acceptor for the enzyme is believed to be ubiquinone. The sequence is that of NADH-ubiquinone oxidoreductase chain 1 (MT-ND1) from Varanus rudicollis (Rough-necked monitor lizard).